Reading from the N-terminus, the 234-residue chain is Orotidine 5'-phosphate decarboxylase (234 aa).

Residues Asp10, Lys32, 59-68, Thr122, Arg184, Gln193, Gly213, and Arg214 each bind substrate; that span reads DLKLHDIPTT. Lys61 serves as the catalytic Proton donor.

Belongs to the OMP decarboxylase family. Type 1 subfamily. As to quaternary structure, homodimer.

The catalysed reaction is orotidine 5'-phosphate + H(+) = UMP + CO2. It functions in the pathway pyrimidine metabolism; UMP biosynthesis via de novo pathway; UMP from orotate: step 2/2. In terms of biological role, catalyzes the decarboxylation of orotidine 5'-monophosphate (OMP) to uridine 5'-monophosphate (UMP). The sequence is that of Orotidine 5'-phosphate decarboxylase from Bacillus pumilus (strain SAFR-032).